The chain runs to 259 residues: Ubiquinol-cytochrome c reductase complex assembly factor 1 (259 aa).

Belongs to the CBP3 family. Interacts with sloth1; the interaction is probably involved in the assembly and stability of the mitochondrial ubiquinol-cytochrome c reductase complex.

Its subcellular location is the mitochondrion inner membrane. Required for the assembly of the ubiquinol-cytochrome c reductase complex (mitochondrial respiratory chain complex III or cytochrome b-c1 complex). May be involved in cytochrome b translation and/or stability. This is Ubiquinol-cytochrome c reductase complex assembly factor 1 from Drosophila melanogaster (Fruit fly).